A 370-amino-acid polypeptide reads, in one-letter code: tRNA-specific 2-thiouridylase MnmA (370 aa).

ATP is bound by residues 9-16 (GMSGGVDS) and Met-35. The interaction with target base in tRNA stretch occupies residues 95–97 (NPD). Residue Cys-100 is the Nucleophile of the active site. A disulfide bridge links Cys-100 with Cys-196. Gly-124 contributes to the ATP binding site. Residues 146-148 (KDQ) are interaction with tRNA. Cys-196 (cysteine persulfide intermediate) is an active-site residue. The segment at 308-309 (RY) is interaction with tRNA.

It belongs to the MnmA/TRMU family.

The protein localises to the cytoplasm. The enzyme catalyses S-sulfanyl-L-cysteinyl-[protein] + uridine(34) in tRNA + AH2 + ATP = 2-thiouridine(34) in tRNA + L-cysteinyl-[protein] + A + AMP + diphosphate + H(+). In terms of biological role, catalyzes the 2-thiolation of uridine at the wobble position (U34) of tRNA, leading to the formation of s(2)U34. The protein is tRNA-specific 2-thiouridylase MnmA of Ralstonia nicotianae (strain ATCC BAA-1114 / GMI1000) (Ralstonia solanacearum).